Consider the following 209-residue polypeptide: NDR1/HIN1-like protein 1 (209 aa).

The chain crosses the membrane as a helical span at residues 18–38 (IFWSIIFVLFIIFLTILLIWA). An N-linked (GlcNAc...) asparagine glycan is attached at Asn58.

Expressed in rosette leaves, cauline leaves, stems, and siliques, and at lower levels in roots and flowers.

It is found in the cell membrane. Functionally, may play a role in plant immunity. The polypeptide is NDR1/HIN1-like protein 1 (Arabidopsis thaliana (Mouse-ear cress)).